Consider the following 171-residue polypeptide: UPF0398 protein M6_Spy1399 (171 aa).

This sequence belongs to the UPF0398 family.

In Streptococcus pyogenes serotype M6 (strain ATCC BAA-946 / MGAS10394), this protein is UPF0398 protein M6_Spy1399.